The following is a 249-amino-acid chain: Tumor necrosis factor ligand superfamily member 12 (249 aa).

The Cytoplasmic segment spans residues 1–21; the sequence is MAARRSQRRRGRRGEPGTALL. Residues 22-42 form a helical; Signal-anchor for type II membrane protein membrane-spanning segment; it reads VPLALGLGLALACLGLLLAVV. Residues 43 to 249 lie on the Extracellular side of the membrane; it reads SLGSRASLSA…LTYFGLFQVH (207 aa). Residues 55-85 are disordered; the sequence is PAQEELVAEEDQDPSELNPQTEESQDPAPFL. Residues 56 to 68 show a composition bias toward acidic residues; it reads AQEELVAEEDQDP. One can recognise a THD domain in the interval 107–248; that stretch reads IAAHYEVHPR…FLTYFGLFQV (142 aa). Asparagine 139 carries N-linked (GlcNAc...) asparagine glycosylation. A disulfide bridge links cysteine 191 with cysteine 210.

It belongs to the tumor necrosis factor family. In terms of assembly, homotrimer. Interacts with the angiogenic factor AGGF1/VG5Q. In terms of processing, the soluble form derives from the membrane form by proteolytic processing. Highly expressed in adult heart, pancreas, skeletal muscle, brain, colon, small intestine, lung, ovary, prostate, spleen, lymph node, appendix and peripheral blood lymphocytes. Low expression in kidney, testis, liver, placenta, thymus and bone marrow. Also detected in fetal kidney, liver, lung and brain.

The protein localises to the cell membrane. It is found in the secreted. Functionally, binds to FN14 and possibly also to TNRFSF12/APO3. Weak inducer of apoptosis in some cell types. Mediates NF-kappa-B activation. Promotes angiogenesis and the proliferation of endothelial cells. Also involved in induction of inflammatory cytokines. Promotes IL8 secretion. This chain is Tumor necrosis factor ligand superfamily member 12 (TNFSF12), found in Homo sapiens (Human).